The sequence spans 129 residues: ATP synthase epsilon chain (129 aa).

It belongs to the ATPase epsilon chain family. As to quaternary structure, F-type ATPases have 2 components, CF(1) - the catalytic core - and CF(0) - the membrane proton channel. CF(1) has five subunits: alpha(3), beta(3), gamma(1), delta(1), epsilon(1). CF(0) has three main subunits: a, b and c.

It is found in the cell inner membrane. Its function is as follows. Produces ATP from ADP in the presence of a proton gradient across the membrane. The protein is ATP synthase epsilon chain of Campylobacter jejuni subsp. doylei (strain ATCC BAA-1458 / RM4099 / 269.97).